The primary structure comprises 116 residues: Small ribosomal subunit protein uS10m (116 aa).

This sequence belongs to the universal ribosomal protein uS10 family.

Its subcellular location is the mitochondrion. The sequence is that of Small ribosomal subunit protein uS10m (RPS10) from Reclinomonas americana.